The sequence spans 835 residues: MIGILKKVFDVNQRQIKRMQKTVEQIDALEPSIKPLTDEQLKGKTLEFKERLTKGETVDDLLPEAFAVVREAATRVLGMRPYGVQLMGGIALHEGNISEMKTGEGKTLTSTLPVYLNALTGKGVHVVTVNEYLAQRDASEMGQLHEFLGLTVGINLNSMSREEKQEAYAADITYSTNNELGFDYLRDNMVLYKEQCVQRPLHFAIIDEVDSILVDEARTPLIISGQAQKSTELYMFANAFVRTLENEKDYSFDVKTKNVMLTEDGITKAEKAFHIENLFDLKHVALLHHINQALRAHVVMHRDTDYVVQEGEIVIVDQFTGRLMKGRRYSEGLHQAIEAKEGVEIQNESMTLATITFQNYFRMYEKLSGMTGTAKTEEEEFRNIYNMNVIVIPTNKPIIRDDRADLIFKSMEGKFNAVVEDIVNRHKQGQPVLVGTVAIETSELISKMLTRKGVRHNILNAKNHAREADIIAEAGIKGAVTIATNMAGRGTDIKLGDDVKNVGLAVIGTERHESRRIDNQLRGRAGRQGDPGVTQFYLSMEDELMRRFGSDNMKAMMDRLGMDDSQPIESKMVSRAVESAQKRVEGNNYDARKQLLQYDDVLRQQREVIYKQRQEVMESENLRGIIEGMMKSTVERAVALHTQEEIEEDWNIKGLVDYLNTNLLQEGDVKEEELRRLAPEEMSEPIIAKLIERYNDKEKLMPEEQMREFEKVVVFRVVDTKWTEHIDAMDHLREGIHLRAYGQIDPLREYQMEGFAMFESMIASIEEEISRYIMKAEIEQNLERQEVVQGEAVHPSSDGEEAKKKPVVKGEQVGRNDLCKCGSGKKYKNCCGIGK.

ATP is bound by residues Gln-85, 103-107 (GEGKT), and Asp-492. Positions 788–807 (VQGEAVHPSSDGEEAKKKPV) are disordered. Residues Cys-819, Cys-821, Cys-830, and Cys-831 each coordinate Zn(2+).

The protein belongs to the SecA family. As to quaternary structure, monomer and homodimer. Part of the essential Sec protein translocation apparatus which comprises SecA, SecYEG and auxiliary proteins SecDF. Other proteins may also be involved. It depends on Zn(2+) as a cofactor.

The protein localises to the cell membrane. The protein resides in the cytoplasm. It catalyses the reaction ATP + H2O + cellular proteinSide 1 = ADP + phosphate + cellular proteinSide 2.. Its function is as follows. Part of the Sec protein translocase complex. Interacts with the SecYEG preprotein conducting channel. Has a central role in coupling the hydrolysis of ATP to the transfer of proteins into and across the cell membrane, serving as an ATP-driven molecular motor driving the stepwise translocation of polypeptide chains across the membrane. This chain is Protein translocase subunit SecA, found in Bacillus cereus (strain ATCC 10987 / NRS 248).